We begin with the raw amino-acid sequence, 541 residues long: GPI alpha-1,2-mannosyltransferase 3 (541 aa).

Residue Asn-18 is glycosylated (N-linked (GlcNAc...) asparagine). A run of 9 helical transmembrane segments spans residues 53 to 73, 126 to 146, 182 to 202, 214 to 234, 245 to 265, 305 to 325, 330 to 350, 352 to 372, and 377 to 397; these read LVLF…TSFV, VHLL…IADL, LTNT…PLEG, LVAL…PLLF, DLIL…SLII, GFPA…FLAP, IFLV…HKEF, FIYP…NNLK, and PALS…GLVH. Asn-417 carries N-linked (GlcNAc...) asparagine glycosylation.

It belongs to the glycosyltransferase 22 family. PIGB subfamily.

It localises to the endoplasmic reticulum membrane. The protein operates within glycolipid biosynthesis; glycosylphosphatidylinositol-anchor biosynthesis. Its function is as follows. Alpha-1,2-mannosyltransferase that catalyzes the transfer of the third mannose, via an alpha-1,2 bond, from a dolichol-phosphate-mannose (Dol-P-Man) to an alpha-D-Man-(1-&gt;6)-2-PEtn-alpha-D-Man-(1-&gt;4)-alpha-D-GlcN-(1-&gt;6)-(1-radyl,2-acyl-sn-glycero-3-phospho)-2-acyl-inositol intermediate to generate an alpha-D-Man-(1-&gt;2)-alpha-D-Man-(1-&gt;6)-2-PEtn-alpha-D-Man-(1-&gt;4)-alpha-D-GlcN-(1-&gt;6)-(1-radyl,2-acyl-sn-glycero-3-phospho)-2-acyl-inositol (also termed H6) and participates in the nineth step of the glycosylphosphatidylinositol-anchor biosynthesis. May also add the third mannose to an alpha-D-Man-(1-&gt;6)-alpha-D-Man-(1-&gt;4)-alpha-D-GlcN-(1-&gt;6)-(1-radyl,2-acyl-sn-glycero-3-phospho)-2-acyl-inositol (also termed H3) intermediate generating an alpha-D-Man-(1-&gt;2)-alpha-D-Man-(1-&gt;6)-alpha-D-Man-(1-&gt;4)-alpha-D-GlcN-(1-&gt;6)-(1-radyl,2-acyl-sn-glycero-3-phospho)-2-acyl-inositol (also termed H4). The sequence is that of GPI alpha-1,2-mannosyltransferase 3 from Bos taurus (Bovine).